Reading from the N-terminus, the 228-residue chain is UPF0758 protein Reut_A2732 (228 aa).

Positions 102-224 (GLDSPAAVRS…VHSFAEHGEL (123 aa)) constitute an MPN domain. His173, His175, and Asp186 together coordinate Zn(2+). The short motif at 173–186 (HNHPSGCCTPSQSD) is the JAMM motif element.

This sequence belongs to the UPF0758 family.

This is UPF0758 protein Reut_A2732 from Cupriavidus pinatubonensis (strain JMP 134 / LMG 1197) (Cupriavidus necator (strain JMP 134)).